The chain runs to 326 residues: uncharacterized protein (326 aa).

The active-site Proton donor is the tyrosine 53. An NADP(+)-binding site is contributed by 215 to 225 (SPLAGGLLGGK). Residues 242–305 (IEKHRLQLEK…AVEISLDKEI (64 aa)) adopt a coiled-coil conformation.

This sequence belongs to the aldo/keto reductase family. Aldo/keto reductase 2 subfamily.

This is an uncharacterized protein from Bacillus subtilis (strain 168).